We begin with the raw amino-acid sequence, 544 residues long: Nucleosome assembly protein 1-like 3 (544 aa).

2 disordered regions span residues 1 to 109 (MAEA…LFLD) and 168 to 345 (PTEE…KKED). Low complexity predominate over residues 35–83 (SNSSSSTNSCSSSGSSSSGSSSSSSSSSSSSSSSSSSSSGSSGSSSNGS). A compositionally biased stretch (acidic residues) spans 168–192 (PTEEECEWNSEEEFSGDEEMQDDTP). 3 stretches are compositionally biased toward basic and acidic residues: residues 207–228 (CNEK…PEAK), 235–277 (PKET…KADS), and 314–332 (PARE…EGVN).

Belongs to the nucleosome assembly protein (NAP) family. As to expression, expressed in brain.

The protein resides in the nucleus. Its subcellular location is the cytoplasm. The chain is Nucleosome assembly protein 1-like 3 (Nap1l3) from Mus musculus (Mouse).